A 188-amino-acid polypeptide reads, in one-letter code: Probable manganese efflux pump MntP (188 aa).

The next 5 helical transmembrane spans lie at Ile3 to Gly23, Leu66 to Ile86, Trp106 to Phe128, Ala143 to Gly163, and Ile168 to Gly188.

The protein belongs to the MntP (TC 9.B.29) family.

It is found in the cell inner membrane. In terms of biological role, probably functions as a manganese efflux pump. In Escherichia coli O7:K1 (strain IAI39 / ExPEC), this protein is Probable manganese efflux pump MntP.